A 490-amino-acid polypeptide reads, in one-letter code: Betaine aldehyde dehydrogenase (490 aa).

Positions 26 and 93 each coordinate K(+). Residue 150-152 (GAW) participates in NAD(+) binding. Lys162 (charge relay system) is an active-site residue. Position 176 to 179 (176 to 179 (KPSE)) interacts with NAD(+). K(+) is bound at residue Val180. 230–233 (GVAT) is an NAD(+) binding site. Leu246 lines the K(+) pocket. Glu252 (proton acceptor) is an active-site residue. Residues Gly254, Cys286, and Glu387 each coordinate NAD(+). Cys286 acts as the Nucleophile in catalysis. The residue at position 286 (Cys286) is a Cysteine sulfenic acid (-SOH). K(+) is bound by residues Lys457 and Gly460. Residue Glu464 is the Charge relay system of the active site.

The protein belongs to the aldehyde dehydrogenase family. As to quaternary structure, dimer of dimers. Requires K(+) as cofactor.

The enzyme catalyses betaine aldehyde + NAD(+) + H2O = glycine betaine + NADH + 2 H(+). It participates in amine and polyamine biosynthesis; betaine biosynthesis via choline pathway; betaine from betaine aldehyde: step 1/1. Functionally, involved in the biosynthesis of the osmoprotectant glycine betaine. Catalyzes the irreversible oxidation of betaine aldehyde to the corresponding acid. This is Betaine aldehyde dehydrogenase from Stenotrophomonas maltophilia (strain K279a).